We begin with the raw amino-acid sequence, 221 residues long: tRNA (guanine-N(7)-)-methyltransferase (221 aa).

S-adenosyl-L-methionine contacts are provided by glutamate 43, glutamate 68, and aspartate 123. Residue aspartate 123 is part of the active site. Substrate-binding positions include lysine 127, aspartate 159, and 199 to 202; that span reads TEYE.

It belongs to the class I-like SAM-binding methyltransferase superfamily. TrmB family.

It catalyses the reaction guanosine(46) in tRNA + S-adenosyl-L-methionine = N(7)-methylguanosine(46) in tRNA + S-adenosyl-L-homocysteine. It functions in the pathway tRNA modification; N(7)-methylguanine-tRNA biosynthesis. Its function is as follows. Catalyzes the formation of N(7)-methylguanine at position 46 (m7G46) in tRNA. The chain is tRNA (guanine-N(7)-)-methyltransferase from Mycoplasma mycoides subsp. mycoides SC (strain CCUG 32753 / NCTC 10114 / PG1).